The sequence spans 128 residues: Small ribosomal subunit protein uS13 (128 aa).

Residues 95-118 (GLPVRGQRTHTNARTRKGPKKGLV) are compositionally biased toward basic residues. Positions 95-128 (GLPVRGQRTHTNARTRKGPKKGLVRKAAAPAPMA) are disordered.

It belongs to the universal ribosomal protein uS13 family. Part of the 30S ribosomal subunit. Forms a loose heterodimer with protein S19. Forms two bridges to the 50S subunit in the 70S ribosome.

Located at the top of the head of the 30S subunit, it contacts several helices of the 16S rRNA. In the 70S ribosome it contacts the 23S rRNA (bridge B1a) and protein L5 of the 50S subunit (bridge B1b), connecting the 2 subunits; these bridges are implicated in subunit movement. Contacts the tRNAs in the A and P-sites. In Anaeromyxobacter dehalogenans (strain 2CP-1 / ATCC BAA-258), this protein is Small ribosomal subunit protein uS13.